Here is a 266-residue protein sequence, read N- to C-terminus: Undecaprenyl-diphosphatase (266 aa).

Helical transmembrane passes span 41–61, 82–102, 106–126, 140–160, 180–200, 213–233, and 245–265; these read NLAFTIVVHVATVFSTLVILW, YVINILISMIPIGIVGVFFKD, AIFGSGLLIVGCMLLLTAALL, ISMKDAFIIGLAQACAVLPGL, LAQFSFLMVIPPILGEALLDG, IPTLSLIVGFIAAFVSGCLAC, and LIYFAIYCAIVGVVTIVVSQL.

The protein belongs to the UppP family.

The protein resides in the cell inner membrane. The enzyme catalyses di-trans,octa-cis-undecaprenyl diphosphate + H2O = di-trans,octa-cis-undecaprenyl phosphate + phosphate + H(+). Its function is as follows. Catalyzes the dephosphorylation of undecaprenyl diphosphate (UPP). Confers resistance to bacitracin. This Bacteroides fragilis (strain ATCC 25285 / DSM 2151 / CCUG 4856 / JCM 11019 / LMG 10263 / NCTC 9343 / Onslow / VPI 2553 / EN-2) protein is Undecaprenyl-diphosphatase.